We begin with the raw amino-acid sequence, 638 residues long: Cell division control protein 45 homolog (638 aa).

Positions 151–204 (ELSDEENSDSSNEREEEVEDDNRSVESYSSSDYQARSRRRFSEETTQRRAEIKE) are disordered. Over residues 153-170 (SDEENSDSSNEREEEVED) the composition is skewed to acidic residues. The segment covering 190–204 (RFSEETTQRRAEIKE) has biased composition (basic and acidic residues).

This sequence belongs to the CDC45 family. As to quaternary structure, interacts with sld3.

It is found in the nucleus. Required for initiation of chromosomal DNA replication. May have a role in regulating the MCM proteins nda1 and nda4. The chain is Cell division control protein 45 homolog (sna41) from Schizosaccharomyces pombe (strain 972 / ATCC 24843) (Fission yeast).